A 153-amino-acid polypeptide reads, in one-letter code: Bacteriohemerythrin (153 aa).

7 residues coordinate Fe cation: His-21, His-57, Glu-61, His-76, His-80, His-115, and Asp-120.

Belongs to the hemerythrin family. Monomer.

Oxygen-binding protein. May be involved in a storage mechanism or for delivery to oxygen-requiring enzymes. The oxygen-binding site contains two iron atoms. The chain is Bacteriohemerythrin from Stenotrophomonas maltophilia (strain R551-3).